A 465-amino-acid polypeptide reads, in one-letter code: Chromosomal replication initiator protein DnaA (465 aa).

The segment at 1–84 is domain I, interacts with DnaA modulators; sequence MSLSLWQQCL…RFEVGSKPLV (84 aa). A domain II region spans residues 84–128; that stretch reads VQAISQPAQPHHKQVSAAPQQQVRSAPVRPSWDNSPAQAEHTYRS. The tract at residues 91-120 is disordered; sequence AQPHHKQVSAAPQQQVRSAPVRPSWDNSPA. The domain III, AAA+ region stretch occupies residues 129–345; that stretch reads NVNPKHTFDN…GALNRVIANA (217 aa). ATP is bound by residues glycine 173, glycine 175, lysine 176, and threonine 177. The tract at residues 346-465 is domain IV, binds dsDNA; sequence NFTGRSITID…FSNLIRTLSS (120 aa).

This sequence belongs to the DnaA family. Oligomerizes as a right-handed, spiral filament on DNA at oriC.

The protein resides in the cytoplasm. In terms of biological role, plays an essential role in the initiation and regulation of chromosomal replication. ATP-DnaA binds to the origin of replication (oriC) to initiate formation of the DNA replication initiation complex once per cell cycle. Binds the DnaA box (a 9 base pair repeat at the origin) and separates the double-stranded (ds)DNA. Forms a right-handed helical filament on oriC DNA; dsDNA binds to the exterior of the filament while single-stranded (ss)DNA is stabiized in the filament's interior. The ATP-DnaA-oriC complex binds and stabilizes one strand of the AT-rich DNA unwinding element (DUE), permitting loading of DNA polymerase. After initiation quickly degrades to an ADP-DnaA complex that is not apt for DNA replication. Binds acidic phospholipids. This is Chromosomal replication initiator protein DnaA from Pectobacterium carotovorum subsp. carotovorum (strain PC1).